The chain runs to 264 residues: Short-chain dehydrogenase/reductase ucsE (264 aa).

Residues 13 to 32 (LVVVVGGTSGLGFAVAQAAV) form a helical membrane-spanning segment. The NADP(+) site is built by Leu23, Ser43, and Asp74. An N-linked (GlcNAc...) asparagine glycan is attached at Asn125. Residues Arg130 and Lys139 each contribute to the NADP(+) site. Ser157 functions as the Proton donor in the catalytic mechanism. Residues Val202 and Thr204 each coordinate NADP(+).

It belongs to the short-chain dehydrogenases/reductases (SDR) family. The cofactor is NADP(+).

The protein localises to the membrane. The protein operates within mycotoxin biosynthesis. Its function is as follows. Short-chain dehydrogenase/reductase; part of the gene cluster that mediates the biosynthesis of UCS1025A, a member of the pyrrolizidinone family that acts as a strong telomerase inhibitor and displays potent antibacterial and antitumor properties. These compounds share a hemiaminal-containing pyrrolizidinone core fused with a gamma-lactone, giving a furopyrrolizidine that is connected to a decalin fragment. The polyketide synthase module (PKS) of the PKS-NRPS ucsA is responsible for the synthesis of the polyketide backbone via the condensation of an acetyl-CoA starter unit with 6 malonyl-CoA units. The downstream nonribosomal peptide synthetase (NRPS) module then amidates the carboxyl end of the polyketide with a 2S,3S-methylproline derived from L-isoleucine by the 2-oxoglutarate-dependent dioxygenase ucsF which converts L-isoleucine to (4S,5S)-4-methylpyrroline-5-carboxylate that is further converted to 2S,3S-methylproline by the pyrroline-5-carboxylate reductase ucsG. Reductive release of the completed aminoacyl polyketide from the assembly line can form the 3-pyrrolin-2-one structure via an intramolecular Knoevenagel reaction. Because ucsA lacks a designated enoylreductase (ER) domain, the required activity is provided the enoyl reductase ucsL. This keto acyclic precursor is the substrate of the Diels-Alderase ucsH, that catalyzes the Diels-Alder cycloaddition. Oxidation of the 3S-methyl group to a carboxylate by the cytochrome P450 monooxygenase ucsK allows an oxa-Michael cyclization that might involve the reductase/dehydrogenase ucsI and which furnishes the furopyrrolizidine. The oxidase ucsJ likely plays a critical role in stereoselective reduction of the C5-C6 double bond to afford the required R-configured carboxylate group. Further enolization and oxidation at C5 by an unidentified enzyme affords the last intermediate that can undergo oxa-Michael cyclization to yield UCS1025A. This Acremonium sp protein is Short-chain dehydrogenase/reductase ucsE.